A 449-amino-acid chain; its full sequence is Glucose-6-phosphate isomerase (449 aa).

Glu291 serves as the catalytic Proton donor. Catalysis depends on residues His312 and Lys426.

It belongs to the GPI family.

It is found in the cytoplasm. The catalysed reaction is alpha-D-glucose 6-phosphate = beta-D-fructose 6-phosphate. It participates in carbohydrate biosynthesis; gluconeogenesis. The protein operates within carbohydrate degradation; glycolysis; D-glyceraldehyde 3-phosphate and glycerone phosphate from D-glucose: step 2/4. In terms of biological role, catalyzes the reversible isomerization of glucose-6-phosphate to fructose-6-phosphate. The polypeptide is Glucose-6-phosphate isomerase (Streptococcus pyogenes serotype M49 (strain NZ131)).